The chain runs to 488 residues: Regulatory protein ViaA (488 aa).

It belongs to the ViaA family. In terms of assembly, homodimer. Interacts with RavA.

It localises to the cytoplasm. Functionally, component of the RavA-ViaA chaperone complex, which may act on the membrane to optimize the function of some of the respiratory chains. ViaA stimulates the ATPase activity of RavA. The chain is Regulatory protein ViaA from Yersinia enterocolitica serotype O:8 / biotype 1B (strain NCTC 13174 / 8081).